Consider the following 711-residue polypeptide: Polyribonucleotide nucleotidyltransferase (711 aa).

Residues Asp-486 and Asp-492 each coordinate Mg(2+). In terms of domain architecture, KH spans 553-612 (PRIHTIKINPDKIKDVIGKGGSVIRALTEETGTTIEIEDDGTVKIAATDGEKAKHAIRRI). In terms of domain architecture, S1 motif spans 622–690 (GRVYTGKVTR…RQGRIRLSIK (69 aa)). Residues 689–711 (IKEATEQSQPAAAPEAPAAEQGE) are disordered. Positions 694–711 (EQSQPAAAPEAPAAEQGE) are enriched in low complexity.

This sequence belongs to the polyribonucleotide nucleotidyltransferase family. Component of the RNA degradosome, which is a multiprotein complex involved in RNA processing and mRNA degradation. Mg(2+) serves as cofactor.

It is found in the cytoplasm. It carries out the reaction RNA(n+1) + phosphate = RNA(n) + a ribonucleoside 5'-diphosphate. In terms of biological role, involved in mRNA degradation. Catalyzes the phosphorolysis of single-stranded polyribonucleotides processively in the 3'- to 5'-direction. The protein is Polyribonucleotide nucleotidyltransferase of Escherichia coli (strain SE11).